The sequence spans 308 residues: Cobalamin biosynthesis protein CobD (308 aa).

The next 6 helical transmembrane spans lie at 1–21, 50–70, 71–91, 151–171, 202–222, and 284–304; these read MEIL…GDPP, FVYG…PVYF, LLDW…AILF, IGDG…PGVM, VLNF…SFFG, and LVLI…VIYF.

The protein belongs to the CobD/CbiB family.

It localises to the cell membrane. It participates in cofactor biosynthesis; adenosylcobalamin biosynthesis. Converts cobyric acid to cobinamide by the addition of aminopropanol on the F carboxylic group. The chain is Cobalamin biosynthesis protein CobD from Dehalococcoides mccartyi (strain CBDB1).